Here is a 309-residue protein sequence, read N- to C-terminus: tRNA dimethylallyltransferase (309 aa).

13 to 20 (GPTGAGKT) serves as a coordination point for ATP. 15–20 (TGAGKT) provides a ligand contact to substrate. Interaction with substrate tRNA stretches follow at residues 38-41 (DSRQ) and 162-166 (QRVTR).

Belongs to the IPP transferase family. Monomer. Mg(2+) is required as a cofactor.

It carries out the reaction adenosine(37) in tRNA + dimethylallyl diphosphate = N(6)-dimethylallyladenosine(37) in tRNA + diphosphate. In terms of biological role, catalyzes the transfer of a dimethylallyl group onto the adenine at position 37 in tRNAs that read codons beginning with uridine, leading to the formation of N6-(dimethylallyl)adenosine (i(6)A). The chain is tRNA dimethylallyltransferase from Nitratidesulfovibrio vulgaris (strain ATCC 29579 / DSM 644 / CCUG 34227 / NCIMB 8303 / VKM B-1760 / Hildenborough) (Desulfovibrio vulgaris).